Consider the following 282-residue polypeptide: Acetyl-coenzyme A carboxylase carboxyl transferase subunit beta (282 aa).

The region spanning 23-282 (IWTKCGQCDA…MLSKLHHQQA (260 aa)) is the CoA carboxyltransferase N-terminal domain. Residues C27, C30, C46, and C49 each contribute to the Zn(2+) site. The C4-type zinc finger occupies 27-49 (CGQCDAVLYKTELEKQLGVCPKC).

It belongs to the AccD/PCCB family. In terms of assembly, acetyl-CoA carboxylase is a heterohexamer composed of biotin carboxyl carrier protein (AccB), biotin carboxylase (AccC) and two subunits each of ACCase subunit alpha (AccA) and ACCase subunit beta (AccD). Requires Zn(2+) as cofactor.

Its subcellular location is the cytoplasm. It carries out the reaction N(6)-carboxybiotinyl-L-lysyl-[protein] + acetyl-CoA = N(6)-biotinyl-L-lysyl-[protein] + malonyl-CoA. It functions in the pathway lipid metabolism; malonyl-CoA biosynthesis; malonyl-CoA from acetyl-CoA: step 1/1. Component of the acetyl coenzyme A carboxylase (ACC) complex. Biotin carboxylase (BC) catalyzes the carboxylation of biotin on its carrier protein (BCCP) and then the CO(2) group is transferred by the transcarboxylase to acetyl-CoA to form malonyl-CoA. The polypeptide is Acetyl-coenzyme A carboxylase carboxyl transferase subunit beta (Pseudoalteromonas atlantica (strain T6c / ATCC BAA-1087)).